We begin with the raw amino-acid sequence, 193 residues long: Peptidyl-tRNA hydrolase (193 aa).

Residue Y17 coordinates tRNA. The Proton acceptor role is filled by H22. TRNA is bound by residues Y68, N70, and N116.

It belongs to the PTH family. Monomer.

The protein localises to the cytoplasm. It catalyses the reaction an N-acyl-L-alpha-aminoacyl-tRNA + H2O = an N-acyl-L-amino acid + a tRNA + H(+). Its function is as follows. Hydrolyzes ribosome-free peptidyl-tRNAs (with 1 or more amino acids incorporated), which drop off the ribosome during protein synthesis, or as a result of ribosome stalling. In terms of biological role, catalyzes the release of premature peptidyl moieties from peptidyl-tRNA molecules trapped in stalled 50S ribosomal subunits, and thus maintains levels of free tRNAs and 50S ribosomes. The protein is Peptidyl-tRNA hydrolase of Chromobacterium violaceum (strain ATCC 12472 / DSM 30191 / JCM 1249 / CCUG 213 / NBRC 12614 / NCIMB 9131 / NCTC 9757 / MK).